We begin with the raw amino-acid sequence, 83 residues long: Vitellogenesis-inhibiting hormone (83 aa).

3 disulfides stabilise this stretch: Cys-15–Cys-52, Cys-32–Cys-48, and Cys-35–Cys-61.

In terms of tissue distribution, found in the sinus glands of both male and female. Found also in the brain; the neuroendocrine structures of the protocerebrum.

Its subcellular location is the secreted. In terms of biological role, inhibits secondary vitellogenesis in females. Has no hyperglycemic or molt-inhibiting activity. This Armadillidium vulgare (Pillbug) protein is Vitellogenesis-inhibiting hormone.